The chain runs to 507 residues: Probable DNA ligase (507 aa).

E209 contributes to the ATP binding site. The N6-AMP-lysine intermediate role is filled by K211. R216, R231, E260, F300, R372, and K378 together coordinate ATP.

This sequence belongs to the ATP-dependent DNA ligase family. Mg(2+) serves as cofactor.

It catalyses the reaction ATP + (deoxyribonucleotide)n-3'-hydroxyl + 5'-phospho-(deoxyribonucleotide)m = (deoxyribonucleotide)n+m + AMP + diphosphate.. DNA ligase that seals nicks in double-stranded DNA during DNA replication, DNA recombination and DNA repair. This is Probable DNA ligase from Mycobacterium bovis (strain ATCC BAA-935 / AF2122/97).